A 211-amino-acid chain; its full sequence is Large ribosomal subunit protein uL3 (211 aa).

This sequence belongs to the universal ribosomal protein uL3 family. As to quaternary structure, part of the 50S ribosomal subunit. Forms a cluster with proteins L14 and L19.

Functionally, one of the primary rRNA binding proteins, it binds directly near the 3'-end of the 23S rRNA, where it nucleates assembly of the 50S subunit. The polypeptide is Large ribosomal subunit protein uL3 (Desulfatibacillum aliphaticivorans).